A 231-amino-acid chain; its full sequence is Phosphatidylserine decarboxylase proenzyme (231 aa).

Ser-188 acts as the Schiff-base intermediate with substrate; via pyruvic acid in catalysis. At Ser-188 the chain carries Pyruvic acid (Ser); by autocatalysis.

The protein belongs to the phosphatidylserine decarboxylase family. PSD-A subfamily. In terms of assembly, heterodimer of a large membrane-associated beta subunit and a small pyruvoyl-containing alpha subunit. Requires pyruvate as cofactor. In terms of processing, is synthesized initially as an inactive proenzyme. Formation of the active enzyme involves a self-maturation process in which the active site pyruvoyl group is generated from an internal serine residue via an autocatalytic post-translational modification. Two non-identical subunits are generated from the proenzyme in this reaction, and the pyruvate is formed at the N-terminus of the alpha chain, which is derived from the carboxyl end of the proenzyme. The post-translation cleavage follows an unusual pathway, termed non-hydrolytic serinolysis, in which the side chain hydroxyl group of the serine supplies its oxygen atom to form the C-terminus of the beta chain, while the remainder of the serine residue undergoes an oxidative deamination to produce ammonia and the pyruvoyl prosthetic group on the alpha chain.

Its subcellular location is the cell membrane. The catalysed reaction is a 1,2-diacyl-sn-glycero-3-phospho-L-serine + H(+) = a 1,2-diacyl-sn-glycero-3-phosphoethanolamine + CO2. It functions in the pathway phospholipid metabolism; phosphatidylethanolamine biosynthesis; phosphatidylethanolamine from CDP-diacylglycerol: step 2/2. In terms of biological role, catalyzes the formation of phosphatidylethanolamine (PtdEtn) from phosphatidylserine (PtdSer). The sequence is that of Phosphatidylserine decarboxylase proenzyme from Rickettsia peacockii (strain Rustic).